The chain runs to 93 residues: MYCSIYKSSKKQGAYLYIEKKDDFSPVPQELMTMFGTPKMVMVVNLEGRKLASVDIEKVEVSLKNDGYFLQLPPPPENLLEKYKQDKAKRNEK.

Residues M1–K84 form the YcgL domain.

This chain is YcgL domain-containing protein VSAL_I1068, found in Aliivibrio salmonicida (strain LFI1238) (Vibrio salmonicida (strain LFI1238)).